We begin with the raw amino-acid sequence, 310 residues long: MSDTNNHSKNIIHRILTEQINLTSNELDTKSTKEIVNIFSEADKEPQKAVERVIPELINAIDEITARLKSKGRLFYIGAGTSGRLGVLDASECPPTFCSNPDLVQGIIAGGIPSLTRSSEHLEDVSEIAIADLKDRNFSYRDVLIGITASGRTPYVIAALNYSKSISALSISISSVPESDSTLDNDIDIRLITGPEILAGSTRLKAGTATKMALNIISTSVMIKLGKVYGNRMIDLSVSNDKLLDRAIGILFDIGSVDKDTAVRLLKKTNGSVKLSLLIALSGMDVIDAKQLLNDSKGNLRTALISFKDN.

An SIS domain is found at isoleucine 64–lysine 227. The Proton donor role is filled by glutamate 92. Glutamate 123 is a catalytic residue.

It belongs to the GCKR-like family. MurNAc-6-P etherase subfamily. As to quaternary structure, homodimer.

The catalysed reaction is N-acetyl-D-muramate 6-phosphate + H2O = N-acetyl-D-glucosamine 6-phosphate + (R)-lactate. The protein operates within amino-sugar metabolism; N-acetylmuramate degradation. In terms of biological role, specifically catalyzes the cleavage of the D-lactyl ether substituent of MurNAc 6-phosphate, producing GlcNAc 6-phosphate and D-lactate. This Prochlorococcus marinus (strain NATL1A) protein is N-acetylmuramic acid 6-phosphate etherase.